Consider the following 190-residue polypeptide: dTTP/UTP pyrophosphatase (190 aa).

D71 serves as the catalytic Proton acceptor.

It belongs to the Maf family. YhdE subfamily. It depends on a divalent metal cation as a cofactor.

The protein resides in the cytoplasm. The catalysed reaction is dTTP + H2O = dTMP + diphosphate + H(+). It catalyses the reaction UTP + H2O = UMP + diphosphate + H(+). Functionally, nucleoside triphosphate pyrophosphatase that hydrolyzes dTTP and UTP. May have a dual role in cell division arrest and in preventing the incorporation of modified nucleotides into cellular nucleic acids. The sequence is that of dTTP/UTP pyrophosphatase from Xanthomonas campestris pv. campestris (strain ATCC 33913 / DSM 3586 / NCPPB 528 / LMG 568 / P 25).